The sequence spans 682 residues: RNA helicase NPH-II (682 aa).

The 174-residue stretch at 181–354 (FELLRKRKQI…EFLPDVEFYH (174 aa)) folds into the Helicase ATP-binding domain. 194–201 (GSTGIGKT) is an ATP binding site. A DEXH box motif is present at residues 303–306 (DEIH). Positions 386 to 551 (NISTTLNWCR…KFKLSLPNDL (166 aa)) constitute a Helicase C-terminal domain.

Belongs to the DEAD box helicase family. DEAH subfamily. In terms of assembly, monomer.

It localises to the virion. It carries out the reaction ATP + H2O = ADP + phosphate + H(+). Its function is as follows. NTP-dependent helicase that catalyzes unidirectional unwinding of 3'tailed duplex RNAs and plays an important role during transcription of early mRNAs, presumably by preventing R-loop formation behind the elongating RNA polymerase. Might also play a role in the export of newly synthesized mRNA chains out of the core into the cytoplasm. Required for replication and propagation of viral particles. The sequence is that of RNA helicase NPH-II (NPH2) from Vertebrata (FPV).